The sequence spans 167 residues: Keratin-associated protein 1-3 (167 aa).

The protein belongs to the KRTAP type 1 family. In terms of assembly, interacts with hair keratins. In terms of tissue distribution, expressed in the middle/upper portions of the hair cortex, in the region termed the keratogenous zone.

In the hair cortex, hair keratin intermediate filaments are embedded in an interfilamentous matrix, consisting of hair keratin-associated proteins (KRTAP), which are essential for the formation of a rigid and resistant hair shaft through their extensive disulfide bond cross-linking with abundant cysteine residues of hair keratins. The matrix proteins include the high-sulfur and high-glycine-tyrosine keratins. This is Keratin-associated protein 1-3 (KRTAP1-3) from Homo sapiens (Human).